A 306-amino-acid chain; its full sequence is Ornithine carbamoyltransferase (306 aa).

Residues 51–54, glutamine 78, arginine 102, and 129–132 each bind carbamoyl phosphate; these read STRT and HPVQ. L-ornithine is bound by residues asparagine 157, aspartate 221, and 225-226; that span reads SM. Residues 261–262 and arginine 289 contribute to the carbamoyl phosphate site; that span reads CL.

It belongs to the aspartate/ornithine carbamoyltransferase superfamily. OTCase family.

It is found in the cytoplasm. It carries out the reaction carbamoyl phosphate + L-ornithine = L-citrulline + phosphate + H(+). Its pathway is amino-acid biosynthesis; L-arginine biosynthesis; L-arginine from L-ornithine and carbamoyl phosphate: step 1/3. Reversibly catalyzes the transfer of the carbamoyl group from carbamoyl phosphate (CP) to the N(epsilon) atom of ornithine (ORN) to produce L-citrulline. The chain is Ornithine carbamoyltransferase from Campylobacter hominis (strain ATCC BAA-381 / DSM 21671 / CCUG 45161 / LMG 19568 / NCTC 13146 / CH001A).